Consider the following 82-residue polypeptide: Small ribosomal subunit protein bS16 (82 aa).

Belongs to the bacterial ribosomal protein bS16 family.

This Haemophilus influenzae (strain 86-028NP) protein is Small ribosomal subunit protein bS16.